Here is a 653-residue protein sequence, read N- to C-terminus: Rab11 family-interacting protein 5 (653 aa).

Positions 5–146 (RGAEPAAGPS…AGRAQHTQWY (142 aa)) constitute a C2 domain. Phosphoserine occurs at positions 176, 283, 286, 307, 357, and 367. The tract at residues 269–300 (GPGAELLTRSPSRSSWLSTEGGRDSAQSPKLF) is disordered. Over residues 277–286 (RSPSRSSWLS) the composition is skewed to polar residues. Disordered regions lie at residues 342 to 402 (HIYN…AVLG) and 415 to 548 (PGAS…RSSL). A compositionally biased stretch (low complexity) spans 357–368 (SISGSLPSSGSL). Residues 375–387 (FSEEGPRSTDDTW) are compositionally biased toward basic and acidic residues. Residues Ser391 and Ser395 each carry the phosphoserine modification. Basic and acidic residues-rich tracts occupy residues 420–430 (PGEEEGARLPE) and 447–460 (VAEK…ERKP). Ser494, Ser538, Ser547, and Ser553 each carry phosphoserine. Positions 586-648 (KDSAVLDQSA…ETSPTLLQIP (63 aa)) constitute an FIP-RBD domain.

In terms of assembly, interacts with RAB11FIP4. Interacts with NAPG. Interacts with RO60. Interacts with RAB11A that has been activated by GTP binding. (Microbial infection) Interacts with Kaposi's sarcoma-associated herpesvirus/HHV-8 protein ORF45; this interaction results in the lysosomal degradation of ORF45 and the inhibition of viral particle release. In terms of processing, phosphorylated on serine and threonine residues. Phosphorylation at Ser-357 is PKA-dependent. In terms of tissue distribution, detected at low levels in heart, brain, placenta, lung, liver, adipocytes, kidney, spleen, skeletal muscle and pancreas.

It is found in the cytoplasm. The protein resides in the recycling endosome membrane. It localises to the early endosome membrane. Its subcellular location is the golgi apparatus membrane. The protein localises to the cytoplasmic vesicle. It is found in the secretory vesicle membrane. The protein resides in the mitochondrion membrane. In terms of biological role, rab effector involved in protein trafficking from apical recycling endosomes to the apical plasma membrane. Involved in insulin granule exocytosis. May regulate V-ATPase intracellular transport in response to extracellular acidosis. The protein is Rab11 family-interacting protein 5 of Homo sapiens (Human).